The chain runs to 254 residues: 5'-nucleotidase SurE (254 aa).

Asp-8, Asp-9, Ser-38, and Asn-91 together coordinate a divalent metal cation.

It belongs to the SurE nucleotidase family. Requires a divalent metal cation as cofactor.

It is found in the cytoplasm. The catalysed reaction is a ribonucleoside 5'-phosphate + H2O = a ribonucleoside + phosphate. Its function is as follows. Nucleotidase that shows phosphatase activity on nucleoside 5'-monophosphates. The polypeptide is 5'-nucleotidase SurE (Anaeromyxobacter sp. (strain K)).